Here is a 581-residue protein sequence, read N- to C-terminus: Chaperonin GroEL 1 (581 aa).

ATP-binding positions include 29 to 32 (TIGP), 86 to 90 (DGTTT), glycine 413, and aspartate 492. Residues 522 to 541 (PEPEAAGPGGPGADPMGGMG) form a disordered region. Residues 528–541 (GPGGPGADPMGGMG) show a composition bias toward gly residues.

The protein belongs to the chaperonin (HSP60) family. Forms a cylinder of 14 subunits composed of two heptameric rings stacked back-to-back. Interacts with the co-chaperonin GroES.

The protein localises to the cytoplasm. It catalyses the reaction ATP + H2O + a folded polypeptide = ADP + phosphate + an unfolded polypeptide.. Functionally, together with its co-chaperonin GroES, plays an essential role in assisting protein folding. The GroEL-GroES system forms a nano-cage that allows encapsulation of the non-native substrate proteins and provides a physical environment optimized to promote and accelerate protein folding. The protein is Chaperonin GroEL 1 of Prochlorococcus marinus (strain MIT 9301).